Reading from the N-terminus, the 226-residue chain is Ribonuclease HII (226 aa).

An RNase H type-2 domain is found at 24-216; that stretch reads QRLCGVDEAG…VRKVLERGMV (193 aa). Asp30, Glu31, and Asp125 together coordinate a divalent metal cation.

This sequence belongs to the RNase HII family. Requires Mn(2+) as cofactor. It depends on Mg(2+) as a cofactor.

Its subcellular location is the cytoplasm. It catalyses the reaction Endonucleolytic cleavage to 5'-phosphomonoester.. Endonuclease that specifically degrades the RNA of RNA-DNA hybrids. The protein is Ribonuclease HII of Cupriavidus metallidurans (strain ATCC 43123 / DSM 2839 / NBRC 102507 / CH34) (Ralstonia metallidurans).